The chain runs to 285 residues: Nucleotide-binding protein Gmet_1286 (285 aa).

8-15 serves as a coordination point for ATP; the sequence is GLSGSGKS. Residue 59-62 participates in GTP binding; the sequence is DIRG.

The protein belongs to the RapZ-like family.

Functionally, displays ATPase and GTPase activities. The chain is Nucleotide-binding protein Gmet_1286 from Geobacter metallireducens (strain ATCC 53774 / DSM 7210 / GS-15).